Here is a 167-residue protein sequence, read N- to C-terminus: Photosystem I assembly protein Ycf3 (167 aa).

3 TPR repeats span residues 35–68, 72–105, and 120–153; these read AFAYYRDGMSAQAEGEYAEALQNYYEAMRLEVDA, SYILYNIGLIHTSNGEHAKALEYYYQAIERNPSL, and GEQAIEEGNSEAAEILFDQAASYWKQAIRLAPTS.

This sequence belongs to the Ycf3 family.

The protein resides in the plastid. It localises to the chloroplast thylakoid membrane. Essential for the assembly of the photosystem I (PSI) complex. May act as a chaperone-like factor to guide the assembly of the PSI subunits. This chain is Photosystem I assembly protein Ycf3, found in Chlorokybus atmophyticus (Soil alga).